Consider the following 437-residue polypeptide: NADH-ubiquinone oxidoreductase chain 4 (437 aa).

13 consecutive transmembrane segments (helical) span residues Gly8–Ile28, Leu50–Ile70, Tyr78–Cys98, Phe100–Leu120, Phe132–Leu152, Leu177–Leu197, Leu212–Ile232, Val239–Ile259, Ala266–Met286, Thr297–Leu317, Leu324–Phe344, Leu361–Ile381, and His417–Val437.

It belongs to the complex I subunit 4 family.

It is found in the mitochondrion membrane. It catalyses the reaction a ubiquinone + NADH + 5 H(+)(in) = a ubiquinol + NAD(+) + 4 H(+)(out). Functionally, core subunit of the mitochondrial membrane respiratory chain NADH dehydrogenase (Complex I) that is believed to belong to the minimal assembly required for catalysis. Complex I functions in the transfer of electrons from NADH to the respiratory chain. The immediate electron acceptor for the enzyme is believed to be ubiquinone. The sequence is that of NADH-ubiquinone oxidoreductase chain 4 (ND4) from Albinaria caerulea (Land snail).